The chain runs to 430 residues: Enolase (430 aa).

Q163 is a binding site for (2R)-2-phosphoglycerate. The active-site Proton donor is E205. D242, E287, and D314 together coordinate Mg(2+). Residues K339, R368, S369, and K390 each contribute to the (2R)-2-phosphoglycerate site. K339 functions as the Proton acceptor in the catalytic mechanism.

Belongs to the enolase family. Requires Mg(2+) as cofactor.

The protein resides in the cytoplasm. Its subcellular location is the secreted. The protein localises to the cell surface. The catalysed reaction is (2R)-2-phosphoglycerate = phosphoenolpyruvate + H2O. Its pathway is carbohydrate degradation; glycolysis; pyruvate from D-glyceraldehyde 3-phosphate: step 4/5. In terms of biological role, catalyzes the reversible conversion of 2-phosphoglycerate (2-PG) into phosphoenolpyruvate (PEP). It is essential for the degradation of carbohydrates via glycolysis. This Bacillus licheniformis (strain ATCC 14580 / DSM 13 / JCM 2505 / CCUG 7422 / NBRC 12200 / NCIMB 9375 / NCTC 10341 / NRRL NRS-1264 / Gibson 46) protein is Enolase.